A 345-amino-acid chain; its full sequence is tRNA dimethylallyltransferase (345 aa).

Residue 9–16 (GPTASGKS) participates in ATP binding. 11 to 16 (TASGKS) is a binding site for substrate. Interaction with substrate tRNA regions lie at residues 34-37 (DSMQ) and 195-199 (QRMIR).

It belongs to the IPP transferase family. In terms of assembly, monomer. It depends on Mg(2+) as a cofactor.

The enzyme catalyses adenosine(37) in tRNA + dimethylallyl diphosphate = N(6)-dimethylallyladenosine(37) in tRNA + diphosphate. Catalyzes the transfer of a dimethylallyl group onto the adenine at position 37 in tRNAs that read codons beginning with uridine, leading to the formation of N6-(dimethylallyl)adenosine (i(6)A). The chain is tRNA dimethylallyltransferase from Orientia tsutsugamushi (strain Ikeda) (Rickettsia tsutsugamushi).